Reading from the N-terminus, the 308-residue chain is Energy-coupling factor transporter ATP-binding protein EcfA2 (308 aa).

Residues 3–263 (IEVKNISKVF…VDFLRENEME (261 aa)) form the ABC transporter domain. ATP is bound at residue 40 to 47 (GPTGSGKT).

It belongs to the ABC transporter superfamily. Energy-coupling factor EcfA family. As to quaternary structure, forms a stable energy-coupling factor (ECF) transporter complex composed of 2 membrane-embedded substrate-binding proteins (S component), 2 ATP-binding proteins (A component) and 2 transmembrane proteins (T component).

It is found in the cell membrane. ATP-binding (A) component of a common energy-coupling factor (ECF) ABC-transporter complex. Unlike classic ABC transporters this ECF transporter provides the energy necessary to transport a number of different substrates. This is Energy-coupling factor transporter ATP-binding protein EcfA2 from Mycoplasma mobile (strain ATCC 43663 / 163K / NCTC 11711) (Mesomycoplasma mobile).